Here is a 329-residue protein sequence, read N- to C-terminus: Cathepsin K (329 aa).

An N-terminal signal peptide occupies residues 1 to 15 (MWGLKVLLLPVMSFA). Positions 16–114 (LYPEEILDTH…TLYIPDWEGR (99 aa)) are cleaved as a propeptide — activation peptide. A glycan (N-linked (GlcNAc...) asparagine) is linked at N103. 3 cysteine pairs are disulfide-bonded: C136–C177, C170–C210, and C269–C318. C139 is a catalytic residue. Residues H276 and N296 contribute to the active site.

It belongs to the peptidase C1 family.

The protein resides in the lysosome. It is found in the secreted. Its subcellular location is the apical cell membrane. It catalyses the reaction Broad proteolytic activity. With small-molecule substrates and inhibitors, the major determinant of specificity is P2, which is preferably Leu, Met &gt; Phe, and not Arg.. Functionally, thiol protease involved in osteoclastic bone resorption and may participate partially in the disorder of bone remodeling. Displays potent endoprotease activity against fibrinogen at acid pH. May play an important role in extracellular matrix degradation. Involved in the release of thyroid hormone thyroxine (T4) by limited proteolysis of TG/thyroglobulin in the thyroid follicle lumen. The protein is Cathepsin K (CTSK) of Macaca fascicularis (Crab-eating macaque).